We begin with the raw amino-acid sequence, 523 residues long: DNA-directed RNA polymerase subunit Rpo2N (523 aa).

The tract at residues Ser501–Asp523 is disordered. Polar residues predominate over residues Met513 to Asp523.

The protein belongs to the RNA polymerase beta chain family. As to quaternary structure, part of the RNA polymerase complex.

It is found in the cytoplasm. The enzyme catalyses RNA(n) + a ribonucleoside 5'-triphosphate = RNA(n+1) + diphosphate. Functionally, DNA-dependent RNA polymerase (RNAP) catalyzes the transcription of DNA into RNA using the four ribonucleoside triphosphates as substrates. The Rpo2 subunit (Rpo2N and Rpo2C in this organism) is implicated in DNA promoter recognition and in nucleotide binding. The sequence is that of DNA-directed RNA polymerase subunit Rpo2N from Halobacterium salinarum (strain ATCC 29341 / DSM 671 / R1).